Consider the following 840-residue polypeptide: MTLDMDAVLSDFVRSTGAEPGLARDLLEGKNWDVSAALSDFEQLRQVHAGNLSPPFSGGSTCPKTPEKGGSDREPTRPSRPILQRQDDVIQEKRLSRGISHASSSIVSLARSHVSSNGGGGGSSEHPLEMPICAFQLPDLTVYKEDFRSFIERDLIEQSMLVALEQAGRLNWWVSMDSTCQRLLPLATTGDGNCLLHAASLGMWGFHDRDLVLRKALYALMEKGVEKEALRRRWRWQQTQQNKESGLVYTEDEWQKEWNELIKLASSEPRMHLGSNGASGGGVESSEEPVYESLEEFHVFVLAHVLKRPIVVVADTMLRDSGGEAFAPIPFGGIYLPLEVPASQCHRSPLVLAYDQAHFSALVSMEQKESAKEQAVIPLTDSEHKLLPLHFAVDPGKGWEWGKDDNDNVRLASIILSLEVKLHLLHSYMNVKWIPLSSDSQAPLAQPESPTASAGDEPRSTPESGESDKESVGSSSLGNEGSRRKEKSKRDREKDKKRADSVANKLGSFGKTLGSKLKKNMGGLMHSKGPKPGGLGSGSGISSGTETLEKKKKNNTLKSWKGGKEEAAGDGPVSEKPPSESVGNGGSKYSQEVMQSLSTMRIAMQGEGKYIFVGTLKMGHRHQYQEEMIQRYLADAEERFLAEQKQKEVERKIMNGGLVSGPPPAKKPEPDGGEDQPSDSPAEPKAMAFSTAYPGGFTIPRPSGGGVHCQEPRRQLAGGPCVGGLPSYATFPRQYPGRPYPHQDNIPALEPGKDGVHRGALLPPQFRVADSYSNGYREPPEPDGWAGAPRGLPPTQTKCKQPNCSFYGHPETNNLCSCCYREELRRREREPGGELLAHRF.

Positions 49 to 88 are disordered; that stretch reads AGNLSPPFSGGSTCPKTPEKGGSDREPTRPSRPILQRQDD. Positions 65-77 are enriched in basic and acidic residues; it reads TPEKGGSDREPTR. Position 100 is a phosphoserine (Ser100). The segment at 152–401 is TRAF-binding; sequence ERDLIEQSML…AVDPGKGWEW (250 aa). Residues 167 to 440 form a catalytic region; that stretch reads AGRLNWWVSM…VKWIPLSSDS (274 aa). The OTU domain maps to 183 to 365; the sequence is LLPLATTGDG…QAHFSALVSM (183 aa). The interval 187 to 193 is regulatory loop; that stretch reads ATTGDGN. Asp191 is a catalytic residue. Residue Cys194 is the Nucleophile of the active site. His358 acts as the Proton acceptor in catalysis. The segment covering 440 to 452 has biased composition (polar residues); that stretch reads SQAPLAQPESPTA. Disordered regions lie at residues 440–592 and 653–710; these read SQAP…YSQE and IMNG…VHCQ. Composition is skewed to basic and acidic residues over residues 456-471 and 488-500; these read DEPRSTPESGESDKES and SKRDREKDKKRAD. Ser464, Ser467, and Ser471 each carry phosphoserine. A Nuclear localization signal motif is present at residues 483–498; it reads RRKEKSKRDREKDKKR. The span at 531 to 541 shows a compositional bias: gly residues; sequence KPGGLGSGSGI. Thr730 bears the Phosphothreonine mark. The A20-type zinc finger occupies 793–828; it reads PPTQTKCKQPNCSFYGHPETNNLCSCCYREELRRRE. Zn(2+)-binding residues include Cys799, Cys804, Cys816, and Cys819.

The protein belongs to the peptidase C64 family. Interacts with TRAF6. Interacts with PARK7, leading to inhibit deubiquitinase activity. Interacts with EGFR, ITCH and NEDD4. Interacts with TRAF3. Interacts with ZAP70 in activated T cells, but not in resting T cells. Post-translationally, phosphorylated by EGFR.

It is found in the cytoplasm. The protein localises to the nucleus. The enzyme catalyses Thiol-dependent hydrolysis of ester, thioester, amide, peptide and isopeptide bonds formed by the C-terminal Gly of ubiquitin (a 76-residue protein attached to proteins as an intracellular targeting signal).. Deubiquitinase activity is inhibited following interaction with PARK7. In terms of biological role, negative regulator of the non-canonical NF-kappa-B pathway that acts by mediating deubiquitination of TRAF3, an inhibitor of the NF-kappa-B pathway, thereby acting as a negative regulator of B-cell responses. In response to non-canonical NF-kappa-B stimuli, deubiquitinates 'Lys-48'-linked polyubiquitin chains of TRAF3, preventing TRAF3 proteolysis and over-activation of non-canonical NF-kappa-B. Negatively regulates mucosal immunity against infections. Deubiquitinates ZAP70, and thereby regulates T cell receptor (TCR) signaling that leads to the activation of NF-kappa-B. Plays a role in T cell homeostasis and is required for normal T cell responses, including production of IFNG and IL2. Mediates deubiquitination of EGFR. Has deubiquitinating activity toward 'Lys-11', 'Lys-48' and 'Lys-63'-linked polyubiquitin chains. Has a much higher catalytic rate with 'Lys-11'-linked polyubiquitin chains (in vitro); however the physiological significance of these data are unsure. Hydrolyzes both linear and branched forms of polyubiquitin. Acts as a regulator of mTORC1 and mTORC2 assembly by mediating 'Lys-63'-linked deubiquitination of MLST8, thereby promoting assembly of the mTORC2 complex, while inibiting formation of the mTORC1 complex. This chain is OTU domain-containing protein 7B (Otud7b), found in Mus musculus (Mouse).